A 211-amino-acid polypeptide reads, in one-letter code: Large ribosomal subunit protein bL25 (211 aa).

It belongs to the bacterial ribosomal protein bL25 family. CTC subfamily. Part of the 50S ribosomal subunit; part of the 5S rRNA/L5/L18/L25 subcomplex. Contacts the 5S rRNA. Binds to the 5S rRNA independently of L5 and L18.

Its function is as follows. This is one of the proteins that binds to the 5S RNA in the ribosome where it forms part of the central protuberance. The sequence is that of Large ribosomal subunit protein bL25 from Methylobacterium nodulans (strain LMG 21967 / CNCM I-2342 / ORS 2060).